A 132-amino-acid polypeptide reads, in one-letter code: Small ribosomal subunit protein uS8c (132 aa).

This sequence belongs to the universal ribosomal protein uS8 family. As to quaternary structure, part of the 30S ribosomal subunit.

It is found in the plastid. The protein resides in the chloroplast. In terms of biological role, one of the primary rRNA binding proteins, it binds directly to 16S rRNA central domain where it helps coordinate assembly of the platform of the 30S subunit. This Zygnema circumcarinatum (Green alga) protein is Small ribosomal subunit protein uS8c (rps8).